Consider the following 296-residue polypeptide: UDP-N-acetylglucosamine transporter TMEM241 (296 aa).

The next 10 helical transmembrane spans lie at 7–29 (LVGL…VLSV), 32–52 (FTYP…LLHV), 67–87 (SHVL…YAGS), 93–113 (LAIP…CGYQ), 121–141 (TSPA…CLPF), 146–166 (FNPD…AYKI), 187–207 (IFSV…FSVL), 211–231 (FLYF…GFFL), 250–270 (WIFF…DAIL), and 271–291 (TSAT…LVFS).

It belongs to the nucleotide-sugar transporter family. SLC35A subfamily.

Its subcellular location is the golgi apparatus. It localises to the cis-Golgi network membrane. Functionally, golgi-localized UDP-N-acetylglucosamine (UDP-GlcNAc) transporter that transports UDP-N-acetylglucosamine into Golgi lumen. Contributes to lysosomal targeting of NPC2, a key protein required for lysosomal cholesterol exiting, and that utilizes the mannose-6-phosphate (M6P) modification pathway for its lysosomal targeting. This is UDP-N-acetylglucosamine transporter TMEM241 from Homo sapiens (Human).